We begin with the raw amino-acid sequence, 324 residues long: 33 kDa ribonucleoprotein, chloroplastic (324 aa).

Residues Met-1 to Cys-71 constitute a chloroplast transit peptide. RRM domains are found at residues Gly-114–Val-192 and His-217–Lys-296. The disordered stretch occupies residues Gly-294–Ser-324. Low complexity predominate over residues Pro-298–Ser-308.

It localises to the plastid. It is found in the chloroplast. Its function is as follows. Could be involved in splicing and/or processing of chloroplast RNA's. The protein is 33 kDa ribonucleoprotein, chloroplastic of Nicotiana sylvestris (Wood tobacco).